We begin with the raw amino-acid sequence, 185 residues long: Meiotically up-regulated gene 5 protein (185 aa).

Its subcellular location is the cytoplasm. In terms of biological role, required for correct meiotic chromosome segregation. This is Meiotically up-regulated gene 5 protein (mug5) from Schizosaccharomyces pombe (strain 972 / ATCC 24843) (Fission yeast).